The following is a 95-amino-acid chain: Co-chaperonin GroES (95 aa).

This sequence belongs to the GroES chaperonin family. As to quaternary structure, heptamer of 7 subunits arranged in a ring. Interacts with the chaperonin GroEL.

It localises to the cytoplasm. Functionally, together with the chaperonin GroEL, plays an essential role in assisting protein folding. The GroEL-GroES system forms a nano-cage that allows encapsulation of the non-native substrate proteins and provides a physical environment optimized to promote and accelerate protein folding. GroES binds to the apical surface of the GroEL ring, thereby capping the opening of the GroEL channel. The sequence is that of Co-chaperonin GroES from Chlorobium luteolum (strain DSM 273 / BCRC 81028 / 2530) (Pelodictyon luteolum).